A 420-amino-acid polypeptide reads, in one-letter code: 5'-deoxyadenosine deaminase (420 aa).

Residues H55 and H57 each coordinate Zn(2+). Substrate-binding residues include E84 and H176. Residue H203 participates in Zn(2+) binding. E206 and D292 together coordinate substrate. D292 serves as a coordination point for Zn(2+).

Belongs to the metallo-dependent hydrolases superfamily. MTA/SAH deaminase family. In terms of assembly, homotetramer. The cofactor is Zn(2+).

The enzyme catalyses 5'-deoxyadenosine + H2O + H(+) = 5'-deoxyinosine + NH4(+). The catalysed reaction is S-adenosyl-L-homocysteine + H2O + H(+) = S-inosyl-L-homocysteine + NH4(+). It catalyses the reaction S-methyl-5'-thioadenosine + H2O + H(+) = S-methyl-5'-thioinosine + NH4(+). It carries out the reaction adenosine + H2O + H(+) = inosine + NH4(+). Its pathway is amino-acid biosynthesis; S-adenosyl-L-methionine biosynthesis. Catalyzes the deamination of three SAM-derived enzymatic products, namely 5'-deoxyadenosine, S-adenosyl-L-homocysteine, and 5'-methylthioadenosine, to produce the inosine analogs. Can also deaminate adenosine. The preferred substrate for this enzyme is 5'-deoxyadenosine, but all these substrates are efficiently deaminated. Likely functions in a S-adenosyl-L-methionine (SAM) recycling pathway from S-adenosyl-L-homocysteine (SAH) produced from SAM-dependent methylation reactions. May also be involved in the recycling of 5'-deoxyadenosine, whereupon the 5'-deoxyribose moiety of 5'-deoxyinosine is further metabolized to deoxyhexoses used for the biosynthesis of aromatic amino acids in methanogens. This Methanocaldococcus jannaschii (strain ATCC 43067 / DSM 2661 / JAL-1 / JCM 10045 / NBRC 100440) (Methanococcus jannaschii) protein is 5'-deoxyadenosine deaminase.